The following is an 87-amino-acid chain: Small ribosomal subunit protein bS20 (87 aa).

It belongs to the bacterial ribosomal protein bS20 family.

In terms of biological role, binds directly to 16S ribosomal RNA. This Finegoldia magna (strain ATCC 29328 / DSM 20472 / WAL 2508) (Peptostreptococcus magnus) protein is Small ribosomal subunit protein bS20.